A 527-amino-acid chain; its full sequence is Glutamate--cysteine ligase (527 aa).

The protein belongs to the glutamate--cysteine ligase type 1 family. Type 1 subfamily.

The enzyme catalyses L-cysteine + L-glutamate + ATP = gamma-L-glutamyl-L-cysteine + ADP + phosphate + H(+). Its pathway is sulfur metabolism; glutathione biosynthesis; glutathione from L-cysteine and L-glutamate: step 1/2. This is Glutamate--cysteine ligase from Bordetella petrii (strain ATCC BAA-461 / DSM 12804 / CCUG 43448).